The sequence spans 152 residues: Transcriptional regulator MraZ (152 aa).

SpoVT-AbrB domains lie at 5–52 (ATLV…PLPE) and 81–124 (ASEC…DETT).

Belongs to the MraZ family. As to quaternary structure, forms oligomers.

Its subcellular location is the cytoplasm. It is found in the nucleoid. In terms of biological role, negatively regulates its own expression and that of the subsequent genes in the proximal part of the division and cell wall (dcw) gene cluster. Acts by binding directly to DNA. May also regulate the expression of genes outside the dcw cluster. The protein is Transcriptional regulator MraZ of Klebsiella pneumoniae (strain 342).